Reading from the N-terminus, the 463-residue chain is MKILFVEPAIFLSAFAMTLTSPLTTQYVYRRIWEETGNYTFSSDSNISECEKNKSSPIFAFQEEVQKKVSRFNLQMDISGLIPGLVSTFILLSISDHYGRKFPMILSSVGALATSVWLCLLCYFAFPFQLLIASTFIGAFCGNYTTFWGACFAYIVDQCKEHKQKTIRIAVIDFLLGLVTGLTGLSSGYFIRELGFGWSFLIIAASLAVNLIYILFFLGDPVKECSSQNVTMSCSEGFKNLFYRTYMLFKNASGKRRFLLCLLLFTTITYFFVVIGIAPIFILYELDSPLCWNEVFIGYGSALGSASFLTSFLGIWLFSYCMEDIHMAFIGIFTTMTGMVMTAFASTTLMMFLARVPFLFTIVPFSVLRSMLSKVVRSTEQGILFACIAFLETLGGVTAVSTFNGIYSATVAWYPGFTFLLSAGLLLLPAISLCVVKCTSWNEGSYELLIQEESSEDASDRAC.

An N-terminal signal peptide occupies residues 1–20 (MKILFVEPAIFLSAFAMTLT). Residues 21–73 (SPLTTQYVYRRIWEETGNYTFSSDSNISECEKNKSSPIFAFQEEVQKKVSRFN) are Extracellular-facing. N-linked (GlcNAc...) asparagine glycosylation is found at Asn-38, Asn-46, and Asn-53. Residues 74–94 (LQMDISGLIPGLVSTFILLSI) form a helical membrane-spanning segment. Over 95–101 (SDHYGRK) the chain is Cytoplasmic. Residues 102–124 (FPMILSSVGALATSVWLCLLCYF) form a helical membrane-spanning segment. The Extracellular portion of the chain corresponds to 125-133 (AFPFQLLIA). Residues 134 to 156 (STFIGAFCGNYTTFWGACFAYIV) form a helical membrane-spanning segment. Over 157-170 (DQCKEHKQKTIRIA) the chain is Cytoplasmic. The helical transmembrane segment at 171–191 (VIDFLLGLVTGLTGLSSGYFI) threads the bilayer. Residues 192–197 (RELGFG) are Extracellular-facing. Residues 198 to 218 (WSFLIIAASLAVNLIYILFFL) form a helical membrane-spanning segment. Residues 219-261 (GDPVKECSSQNVTMSCSEGFKNLFYRTYMLFKNASGKRRFLLC) lie on the Cytoplasmic side of the membrane. Residues 262-282 (LLLFTTITYFFVVIGIAPIFI) form a helical membrane-spanning segment. The Extracellular segment spans residues 283–294 (LYELDSPLCWNE). A helical transmembrane segment spans residues 295–315 (VFIGYGSALGSASFLTSFLGI). At 316–324 (WLFSYCMED) the chain is on the cytoplasmic side. A helical membrane pass occupies residues 325 to 345 (IHMAFIGIFTTMTGMVMTAFA). Over 346-347 (ST) the chain is Extracellular. A helical membrane pass occupies residues 348 to 368 (TLMMFLARVPFLFTIVPFSVL). Topologically, residues 369-382 (RSMLSKVVRSTEQG) are cytoplasmic. The chain crosses the membrane as a helical span at residues 383–403 (ILFACIAFLETLGGVTAVSTF). At 404–415 (NGIYSATVAWYP) the chain is on the extracellular side. Residues 416–436 (GFTFLLSAGLLLLPAISLCVV) form a helical membrane-spanning segment. The Cytoplasmic portion of the chain corresponds to 437-463 (KCTSWNEGSYELLIQEESSEDASDRAC). The short motif at 446–449 (YELL) is the Tyrosine-based lysosomal-sorting motif element.

This sequence belongs to the major facilitator superfamily. SLC46A family.

The protein resides in the lysosome membrane. It catalyses the reaction estrone 3-sulfate(out) + n H(+)(out) = estrone 3-sulfate(in) + n H(+)(in). The enzyme catalyses 25-hydroxyvitamin D3 sulfate(out) + n H(+)(out) = 25-hydroxyvitamin D3 sulfate(in) + n H(+)(in). It carries out the reaction cholate(out) + n H(+)(out) = cholate(in) + n H(+)(in). The catalysed reaction is glycocholate(out) + n H(+)(out) = glycocholate(in) + n H(+)(in). It catalyses the reaction taurocholate(out) + n H(+)(out) = taurocholate(in) + n H(+)(in). The enzyme catalyses dehydroepiandrosterone 3-sulfate(out) + n H(+)(out) = dehydroepiandrosterone 3-sulfate(in) + n H(+)(in). It carries out the reaction N-acetyl-D-muramoyl-L-alanyl-D-isoglutamine(out) + n H(+)(out) = N-acetyl-D-muramoyl-L-alanyl-D-isoglutamine(in) + n H(+)(in). The catalysed reaction is 2',3'-cGAMP(out) + n H(+)(out) = 2',3'-cGAMP(in) + n H(+)(in). In terms of biological role, lysosomal proton-coupled steroid conjugate and bile acid transporter. Preferentially recognizes lipophilic steroid conjugates or bile acis as endogenous substrates and seems to mediate escape from lysosomes to the cytoplasm. Modulates hepatic cytosolic copper homeostasis, maybe acting as a lysosomal copper transporter and sequestering copper ions in the lysosome. Delivers pathogen-associated molecular patterns to cytosolic pattern recognition receptors as part of the innate immune response to microbes. Selectively transports bacterial muramyl dipeptide (MDP) into the cytosol for recognition by NOD2, triggering inflammatory responses. Likely acts as a redundant importer of cyclic GMP-AMP dinucleotides (cGAMPs) in monocyte and macrophage cell lineages. The transport mechanism, its electrogenicity and stoichiometry remain to be elucidated. The polypeptide is Lysosomal proton-coupled steroid conjugate and bile acid symporter SLC46A3 (SLC46A3) (Pongo abelii (Sumatran orangutan)).